The following is a 309-amino-acid chain: Aspartate carbamoyltransferase catalytic subunit (309 aa).

Carbamoyl phosphate is bound by residues R58 and T59. K86 provides a ligand contact to L-aspartate. Carbamoyl phosphate is bound by residues R108, H136, and Q139. L-aspartate is bound by residues R169 and R223. 2 residues coordinate carbamoyl phosphate: G264 and P265.

It belongs to the aspartate/ornithine carbamoyltransferase superfamily. ATCase family. In terms of assembly, heterododecamer (2C3:3R2) of six catalytic PyrB chains organized as two trimers (C3), and six regulatory PyrI chains organized as three dimers (R2).

The catalysed reaction is carbamoyl phosphate + L-aspartate = N-carbamoyl-L-aspartate + phosphate + H(+). Its pathway is pyrimidine metabolism; UMP biosynthesis via de novo pathway; (S)-dihydroorotate from bicarbonate: step 2/3. Catalyzes the condensation of carbamoyl phosphate and aspartate to form carbamoyl aspartate and inorganic phosphate, the committed step in the de novo pyrimidine nucleotide biosynthesis pathway. This chain is Aspartate carbamoyltransferase catalytic subunit, found in Pelotomaculum thermopropionicum (strain DSM 13744 / JCM 10971 / SI).